The sequence spans 101 residues: MAKTSAVEKNKRRRKLVANHSAKRAALKATIMNQSLPIEERFKATLKLAELPRDGSKTRIRNRCEVTGRPRAYYRKLRMSRIALRELGNLGKVPGVVKSSW.

The tract at residues 1 to 20 is disordered; that stretch reads MAKTSAVEKNKRRRKLVANH. The segment covering 10 to 20 has biased composition (basic residues); sequence NKRRRKLVANH.

It belongs to the universal ribosomal protein uS14 family. In terms of assembly, part of the 30S ribosomal subunit. Contacts proteins S3 and S10.

Functionally, binds 16S rRNA, required for the assembly of 30S particles and may also be responsible for determining the conformation of the 16S rRNA at the A site. The sequence is that of Small ribosomal subunit protein uS14 from Sinorhizobium medicae (strain WSM419) (Ensifer medicae).